The following is a 166-amino-acid chain: NAD(P)H-quinone oxidoreductase subunit I, chloroplastic (166 aa).

2 consecutive 4Fe-4S ferredoxin-type domains span residues glycine 55–lysine 84 and leucine 95–glutamate 124. 8 residues coordinate [4Fe-4S] cluster: cysteine 64, cysteine 67, cysteine 70, cysteine 74, cysteine 104, cysteine 107, cysteine 110, and cysteine 114.

This sequence belongs to the complex I 23 kDa subunit family. NDH is composed of at least 16 different subunits, 5 of which are encoded in the nucleus. [4Fe-4S] cluster is required as a cofactor.

Its subcellular location is the plastid. It localises to the chloroplast thylakoid membrane. It catalyses the reaction a plastoquinone + NADH + (n+1) H(+)(in) = a plastoquinol + NAD(+) + n H(+)(out). It carries out the reaction a plastoquinone + NADPH + (n+1) H(+)(in) = a plastoquinol + NADP(+) + n H(+)(out). Functionally, NDH shuttles electrons from NAD(P)H:plastoquinone, via FMN and iron-sulfur (Fe-S) centers, to quinones in the photosynthetic chain and possibly in a chloroplast respiratory chain. The immediate electron acceptor for the enzyme in this species is believed to be plastoquinone. Couples the redox reaction to proton translocation, and thus conserves the redox energy in a proton gradient. The chain is NAD(P)H-quinone oxidoreductase subunit I, chloroplastic from Encelia californica (Bush sunflower).